A 256-amino-acid chain; its full sequence is Protein FixA (256 aa).

This sequence belongs to the ETF beta-subunit/FixA family. Heterodimer of FixA and FixB.

It functions in the pathway amine and polyamine metabolism; carnitine metabolism. In terms of biological role, required for anaerobic carnitine reduction. May bring reductant to CaiA. This Shigella flexneri serotype 5b (strain 8401) protein is Protein FixA.